Consider the following 561-residue polypeptide: Acyl-CoA ligase frbB (561 aa).

ATP-binding positions include 213–221 (TSGTSGAQK), 354–359 (PGWGLT), aspartate 437, arginine 456, and lysine 551. The SBD1 stretch occupies residues 284–354 (DLKRVLGSIA…TLRPKWHLQP (71 aa)). The SBD2 stretch occupies residues 355 to 417 (GWGLTEGGGA…MKSPSVIAGY (63 aa)).

Belongs to the ATP-dependent AMP-binding enzyme family.

It participates in antifungal biosynthesis. In terms of biological role, acyl-CoA ligase; part of the gene cluster that mediates the biosynthesis of the antifungal antibiotic FR901469, an inhibitor of beta-1,3-glucansynthase, exerting antifungal activity against the pathogenes Candida albicans and Aspergillus fumigatus. FR901469 is a cyclic depsipeptide containing 12 amino acid residues and a fatty acid chain. The NRPS frbI contains 12 modules responsible for the formation of the depsipeptide backbone which is denoted as Acyl-Thr-Ala-Tyr-Val-4OHPro-Thr-Thr-3OHPro-threo3OHGln-Gly-Thr-Orn-OH (C71H116N14O23). The PKS frbB is probably involved in the production of the hydrocarbon chain, and the acyl-CoA ligase frbC might be involved in the transport of the chain to the peptide ptoduct of frbI. Because FR901469 contains 3 hydroxylated amino acid residues, the 3 oxygenases frbA, frbH, and frbJ might be participating in amino acid hydroxylation. As no thioesterase domains were detected in frbI or frbB, the thioesterases frbD and frbE may instead release and cyclize the products of the NRPS and PKS, respectively. The chain is Acyl-CoA ligase frbB from Dothideomycetidae sp. (strain 11243) (Fungal sp. (strain No.11243)).